The following is a 658-amino-acid chain: Secretin XcpQ (658 aa).

A signal peptide spans 1–34; it reads MSQPLLRALFAPSSRSYVPAVLLSLALGIQAAHA. The tract at residues 51-141 is N0; the sequence is AHWTINLKDA…TEAGGGQSAP (91 aa). The segment at 142-205 is N1; that stretch reads DRLETRVIQV…DVIRQLDQKG (64 aa). The segment at 206–279 is N2; sequence SHDYSVINLR…SLDTPTARSA (74 aa). Positions 280–365 are N3; sequence NTRVIRLRHN…VPRAQVLVEA (86 aa). The tract at residues 302–322 is disordered; it reads SEGMKNNGGQGGEQTGGGRPS. Positions 307-320 are enriched in gly residues; that stretch reads NNGGQGGEQTGGGR. The tract at residues 368 to 606 is secretin; sequence VEISGDIQDA…VFLRPTVVRD (239 aa). A s domain region spans residues 608–658; the sequence is AGLAALSGKKYSDIRVIDGTRGPEGRPSILPTNANQLFDGQAVDLRELMTE.

The protein belongs to the bacterial secretin family. GSP D subfamily. In terms of assembly, forms a cylindrical channel with 15 subunits. The closed pentadecameric channel is 170 Angstroms long and 140 Angstroms in diameter.

The protein resides in the cell outer membrane. In terms of biological role, involved in a type II secretion system (T2SS, formerly general secretion pathway, GSP) for the export of proteins. This subunit forms the outer membrane channel. Among its substrates are PrpL, elastase LasB, chitin binding protein D (CbpD), aminopeptidase PaAP, and metalloprotease ImpA. This is Secretin XcpQ from Pseudomonas aeruginosa (strain ATCC 15692 / DSM 22644 / CIP 104116 / JCM 14847 / LMG 12228 / 1C / PRS 101 / PAO1).